The chain runs to 199 residues: COMM domain-containing protein 2 (199 aa).

Residues 123 to 190 (SYHNLEWRLD…QALEEMKTNH (68 aa)) enclose the COMM domain.

It belongs to the COMM domain-containing protein 2 family. Component of the commander complex consisting of the CCC subcomplex and the retriever subcomplex. Component of the CCC (COMMD/CCDC22/CCDC93) subcomplex consisting of COMMD1, COMMD2, COMMD3, COMMD4, COMMD5, COMMD6, COMMD7, COMMD8, COMMD9, COMMD10, CCDC22 and CCDC93; within the complex forms a heterodimer with COMMD3. Interacts with RELA, RELB, NFKB1/p105, NFKB2/p100. Interacts with CCDC22, CCDC93, SCNN1B, CUL3, CUL4B, CUL5, CUL7. As to expression, ubiquitous.

It is found in the cytoplasm. Its function is as follows. Scaffold protein in the commander complex that is essential for endosomal recycling of transmembrane cargos; the commander complex is composed of the CCC subcomplex and the retriever subcomplex. May modulate activity of cullin-RING E3 ubiquitin ligase (CRL) complexes. May down-regulate activation of NF-kappa-B. In Homo sapiens (Human), this protein is COMM domain-containing protein 2 (COMMD2).